We begin with the raw amino-acid sequence, 259 residues long: Ubiquinone/menaquinone biosynthesis C-methyltransferase UbiE (259 aa).

Residues Thr82, Asp103, 131 to 132 (NA), and Ser148 each bind S-adenosyl-L-methionine.

The protein belongs to the class I-like SAM-binding methyltransferase superfamily. MenG/UbiE family.

It catalyses the reaction a 2-demethylmenaquinol + S-adenosyl-L-methionine = a menaquinol + S-adenosyl-L-homocysteine + H(+). The catalysed reaction is a 2-methoxy-6-(all-trans-polyprenyl)benzene-1,4-diol + S-adenosyl-L-methionine = a 5-methoxy-2-methyl-3-(all-trans-polyprenyl)benzene-1,4-diol + S-adenosyl-L-homocysteine + H(+). It functions in the pathway quinol/quinone metabolism; menaquinone biosynthesis; menaquinol from 1,4-dihydroxy-2-naphthoate: step 2/2. It participates in cofactor biosynthesis; ubiquinone biosynthesis. In terms of biological role, methyltransferase required for the conversion of demethylmenaquinol (DMKH2) to menaquinol (MKH2) and the conversion of 2-polyprenyl-6-methoxy-1,4-benzoquinol (DDMQH2) to 2-polyprenyl-3-methyl-6-methoxy-1,4-benzoquinol (DMQH2). The chain is Ubiquinone/menaquinone biosynthesis C-methyltransferase UbiE from Vibrio parahaemolyticus serotype O3:K6 (strain RIMD 2210633).